The following is an 893-amino-acid chain: DNA mismatch repair protein MutS (893 aa).

Over residues 1–17 (MESTMSSASTNASPPSA) the composition is skewed to low complexity. The interval 1–22 (MESTMSSASTNASPPSASEKHT) is disordered. An ATP-binding site is contributed by 641–648 (GPNMGGKS).

Belongs to the DNA mismatch repair MutS family.

This protein is involved in the repair of mismatches in DNA. It is possible that it carries out the mismatch recognition step. This protein has a weak ATPase activity. The sequence is that of DNA mismatch repair protein MutS from Herminiimonas arsenicoxydans.